We begin with the raw amino-acid sequence, 56 residues long: Large ribosomal subunit protein bL33C (56 aa).

It belongs to the bacterial ribosomal protein bL33 family.

The sequence is that of Large ribosomal subunit protein bL33C from Sorangium cellulosum (strain So ce56) (Polyangium cellulosum (strain So ce56)).